We begin with the raw amino-acid sequence, 151 residues long: Probable cGMP 3',5'-cyclic phosphodiesterase subunit delta (151 aa).

Belongs to the PDE6D/unc-119 family. In terms of assembly, interacts with Pde6.

It localises to the nucleus. The protein resides in the cytoplasm. This chain is Probable cGMP 3',5'-cyclic phosphodiesterase subunit delta, found in Drosophila grimshawi (Hawaiian fruit fly).